We begin with the raw amino-acid sequence, 527 residues long: Berberine bridge enzyme-like 5 (527 aa).

The first 19 residues, 1 to 19 (MKALFSVLCLVLLVSILRA), serve as a signal peptide directing secretion. Cysteine 32 and cysteine 95 are oxidised to a cystine. Asparagine 35 and asparagine 52 each carry an N-linked (GlcNAc...) asparagine glycan. The 175-residue stretch at 73 to 247 (NYQKLVAIVA…LSWKINLVEV (175 aa)) folds into the FAD-binding PCMH-type domain. Residues 110 to 172 (HDYEGLSYTS…QTLAFPAGVC (63 aa)) constitute a cross-link (6-(S-cysteinyl)-8alpha-(pros-histidyl)-FAD (His-Cys)). An N-linked (GlcNAc...) asparagine glycan is attached at asparagine 341.

It belongs to the oxygen-dependent FAD-linked oxidoreductase family. The cofactor is FAD. Post-translationally, the FAD cofactor is bound via a bicovalent 6-S-cysteinyl, 8alpha-N1-histidyl FAD linkage.

The protein resides in the secreted. It localises to the cell wall. Its function is as follows. Probable flavin-dependent oxidoreductase. This chain is Berberine bridge enzyme-like 5, found in Arabidopsis thaliana (Mouse-ear cress).